Reading from the N-terminus, the 1331-residue chain is Lysine-specific demethylase 3A-A (1331 aa).

Disordered regions lie at residues 243 to 280 (LNDK…PSKD), 358 to 381 (TPPQ…TQNL), and 497 to 532 (KVVK…VTYP). A compositionally biased stretch (basic and acidic residues) spans 266-280 (TELKQTRNEEVPSKD). The C6-type zinc-finger motif lies at 683-708 (CDACDTTIFNLHWVCPKCGFGVCVDC). The LXXLL motif signature appears at 894–898 (LRNLL). One can recognise a JmjC domain in the interval 1086-1291 (RREGKLNLAA…HCFWLTQEFR (206 aa)). 3 residues coordinate Fe cation: His-1130, Asp-1132, and His-1259.

The protein belongs to the JHDM2 histone demethylase family. Requires Fe(2+) as cofactor.

It is found in the cytoplasm. The protein resides in the nucleus. The enzyme catalyses N(6),N(6)-dimethyl-L-lysyl(9)-[histone H3] + 2 2-oxoglutarate + 2 O2 = L-lysyl(9)-[histone H3] + 2 formaldehyde + 2 succinate + 2 CO2. Histone demethylase that specifically demethylates 'Lys-9' of histone H3, thereby playing a central role in histone code. Preferentially demethylates mono- and dimethylated H3 'Lys-9' residue, with a preference for dimethylated residue, while it has weak or no activity on trimethylated H3 'Lys-9'. Demethylation of Lys residue generates formaldehyde and succinate. In Xenopus laevis (African clawed frog), this protein is Lysine-specific demethylase 3A-A (kdm3a-a).